The primary structure comprises 173 residues: uncharacterized protein (173 aa).

Positions 1–15 (MERKLSQRAGNTFKG) are cleaved as a propeptide — leader sequence. N-methylphenylalanine is present on phenylalanine 16. The chain crosses the membrane as a helical span at residues 16–37 (FTLVEVLITLAIISLVFSLILI).

It is found in the membrane. This is an uncharacterized protein from Aquifex aeolicus (strain VF5).